A 125-amino-acid polypeptide reads, in one-letter code: Large ribosomal subunit protein bL12 (125 aa).

It belongs to the bacterial ribosomal protein bL12 family. Homodimer. Part of the ribosomal stalk of the 50S ribosomal subunit. Forms a multimeric L10(L12)X complex, where L10 forms an elongated spine to which 2 to 4 L12 dimers bind in a sequential fashion. Binds GTP-bound translation factors.

Functionally, forms part of the ribosomal stalk which helps the ribosome interact with GTP-bound translation factors. Is thus essential for accurate translation. The polypeptide is Large ribosomal subunit protein bL12 (Helicobacter acinonychis (strain Sheeba)).